Reading from the N-terminus, the 423-residue chain is Cyclin-dependent kinase 14 (423 aa).

Residues 62-85 are disordered; sequence VGKESPKVRRHSSPSSPTSPKFGK. A Protein kinase domain is found at 89–373; that stretch reads YEKLEKLGEG…AQAALNHDYF (285 aa). Residues 95 to 103 and K118 each bind ATP; that span reads LGEGSYATV. D210 (proton acceptor) is an active-site residue.

It belongs to the protein kinase superfamily. CMGC Ser/Thr protein kinase family. CDC2/CDKX subfamily. Interacts with ccny; ccny mediates its recruitment to the plasma membrane and promotes phosphorylation of lrp6.

Its subcellular location is the cell membrane. The enzyme catalyses L-seryl-[protein] + ATP = O-phospho-L-seryl-[protein] + ADP + H(+). It carries out the reaction L-threonyl-[protein] + ATP = O-phospho-L-threonyl-[protein] + ADP + H(+). Serine/threonine-protein kinase involved in the control of the eukaryotic cell cycle, whose activity is controlled by an associated cyclin. Acts as a cell-cycle regulator of Wnt signaling pathway during G2/M phase by mediating the phosphorylation of lrp6, leading to the activation of the Wnt signaling pathway. This Xenopus tropicalis (Western clawed frog) protein is Cyclin-dependent kinase 14 (cdk14).